We begin with the raw amino-acid sequence, 369 residues long: MHKNENNRLLGSVSLPDDPDRSLRPQVLDDFIGQEAARANLKIFIEAAKTRHEALDHVLFVGPPGLGKTTLSQIMAKELGVNFRSTSGPVIAKAGDLAALLTNLEERDVLFIDEIHRLNPAIEEILYPAMEDYQLDLIIGEGPAARSVKIDLAKFTLVAATTRLGLLTTPLRDRFGIPIRLNFYTIEELEYIVKRNARLFSVPISDDGAHEIARRARGTPRIAGRLLRRVCDFALVKQAKTIDREIADTALSRLEVDHLGLDPLDRNYLMLIADVFLGGPVGIETIAAALSEPRDAIEDIIEPYLLQQGFIQRTPRGRIITEKAWAHLGLRAPTQPAASATLSTPDLSTSSDVPVSSLIQKHLWEKDYD.

The interval 1–21 is disordered; sequence MHKNENNRLLGSVSLPDDPDR. Residues 1 to 184 form a large ATPase domain (RuvB-L) region; the sequence is MHKNENNRLL…FGIPIRLNFY (184 aa). ATP-binding positions include leucine 23, arginine 24, glycine 65, lysine 68, threonine 69, threonine 70, 131–133, arginine 174, tyrosine 184, and arginine 221; that span reads EDY. Threonine 69 contacts Mg(2+). Positions 185-255 are small ATPAse domain (RuvB-S); the sequence is TIEELEYIVK…IADTALSRLE (71 aa). The segment at 258–369 is head domain (RuvB-H); that stretch reads HLGLDPLDRN…QKHLWEKDYD (112 aa). Residues arginine 294, arginine 313, and arginine 318 each contribute to the DNA site.

This sequence belongs to the RuvB family. As to quaternary structure, homohexamer. Forms an RuvA(8)-RuvB(12)-Holliday junction (HJ) complex. HJ DNA is sandwiched between 2 RuvA tetramers; dsDNA enters through RuvA and exits via RuvB. An RuvB hexamer assembles on each DNA strand where it exits the tetramer. Each RuvB hexamer is contacted by two RuvA subunits (via domain III) on 2 adjacent RuvB subunits; this complex drives branch migration. In the full resolvosome a probable DNA-RuvA(4)-RuvB(12)-RuvC(2) complex forms which resolves the HJ.

It localises to the cytoplasm. It catalyses the reaction ATP + H2O = ADP + phosphate + H(+). The RuvA-RuvB-RuvC complex processes Holliday junction (HJ) DNA during genetic recombination and DNA repair, while the RuvA-RuvB complex plays an important role in the rescue of blocked DNA replication forks via replication fork reversal (RFR). RuvA specifically binds to HJ cruciform DNA, conferring on it an open structure. The RuvB hexamer acts as an ATP-dependent pump, pulling dsDNA into and through the RuvAB complex. RuvB forms 2 homohexamers on either side of HJ DNA bound by 1 or 2 RuvA tetramers; 4 subunits per hexamer contact DNA at a time. Coordinated motions by a converter formed by DNA-disengaged RuvB subunits stimulates ATP hydrolysis and nucleotide exchange. Immobilization of the converter enables RuvB to convert the ATP-contained energy into a lever motion, pulling 2 nucleotides of DNA out of the RuvA tetramer per ATP hydrolyzed, thus driving DNA branch migration. The RuvB motors rotate together with the DNA substrate, which together with the progressing nucleotide cycle form the mechanistic basis for DNA recombination by continuous HJ branch migration. Branch migration allows RuvC to scan DNA until it finds its consensus sequence, where it cleaves and resolves cruciform DNA. This chain is Holliday junction branch migration complex subunit RuvB, found in Bartonella bacilliformis (strain ATCC 35685 / KC583 / Herrer 020/F12,63).